A 1211-amino-acid chain; its full sequence is DNA polymerase beta (1211 aa).

4 consecutive repeat copies span residues 1074–1077 (KPAG), 1078–1081 (KPAG), 1082–1085 (NPAG), and 1086–1089 (NPAG). Residues 1074 to 1089 (KPAGKPAGNPAGNPAG) form a 4 X 4 AA tandem repeats of [NK]-[P]-A-G region.

This sequence belongs to the DNA polymerase type-B family.

The catalysed reaction is DNA(n) + a 2'-deoxyribonucleoside 5'-triphosphate = DNA(n+1) + diphosphate. Its function is as follows. DNA-directed DNA polymerase involved in viral DNA replication. The protein is DNA polymerase beta (DPOL) of African swine fever virus (strain Badajoz 1971 Vero-adapted) (Ba71V).